The primary structure comprises 205 residues: Putative 3-methyladenine DNA glycosylase (205 aa).

Belongs to the DNA glycosylase MPG family.

The polypeptide is Putative 3-methyladenine DNA glycosylase (Bacillus cereus (strain Q1)).